A 750-amino-acid chain; its full sequence is MIIRSPEPEVKIVVDRNPIKTSFEEWARPGHFSRTIAKGPDTTTWIWNLHADAHDFDSHTSDLEEISRKVFSAHFGQLSIIFLWLSGMYFHGARFSNYEAWLSDPTHIAPSAQVVWPIVGQEILNGDVGGGFRGIQITSGFFQIWRASGITSELQLYCTAIGALVFASLMLFAGWFHYHKAAPKLAWFQDVESMLNHHLAGLLGLGSLSWAGHQIHVSLPINQFLDAGVDPKEIPLPHEFILNRDLLAQLYPSFAEGATPFFTLNWAKYAEFLSFRGGLDPITGGLWLSDIAHHHLAIAILFLIAGHMYRTNWAIGHGLKDILEAHKGPFTGQGHKGLYEILTTSWHAQLSLNLAMLGSLTIVVAHHMYSMPPYPYLAIDYGTQLSLFTHHMWIGGFLIVGAAAHAAIFMVRDYDPTTRYNDLLDRVLRHRDAIISHLNWACIFLGFHSFGLYIHNDTMSALGRPQDMFSDTAIQLQPIFAQWVQNTHALAPNVTAPGATTSTSLIWGGGELVAVGGKVALLPIPLGTADFLVHHIHAFTIHVTVLILLKGVLFARSSRLIPDKANLGFRFPCDGPGRGGTCQVSAWDHVFLGLFWMYNAISVVIFHFSWKMQSDVWGTISDQGVVTHITGGNFAQSSITINGWLRDFLWAQASQVIQSYGSSLSAYGLFFLGAHFVWAFSLMFLFSGRGYWQELIESIVWAHNKLKVAPATQPRALSIVQGRAVGVTHYLLGGIATTWAFFLARIIAVG.

A run of 8 helical transmembrane segments spans residues 70 to 93 (VFSA…FHGA), 156 to 179 (LYCT…FHYH), 195 to 219 (LNHH…HVSL), 291 to 309 (IAHH…GHMY), 346 to 369 (WHAQ…HHMY), 385 to 411 (LSLF…IFMV), 433 to 455 (AIIS…LYIH), and 531 to 549 (FLVH…LILL). Cys573 and Cys582 together coordinate [4Fe-4S] cluster. Transmembrane regions (helical) follow at residues 589-610 (HVFL…HFSW) and 664-686 (LSAY…MFLF). A chlorophyll a'-binding site is contributed by His675. 2 residues coordinate chlorophyll a: Met683 and Tyr691. Position 692 (Trp692) interacts with phylloquinone. The helical transmembrane segment at 724–744 (AVGVTHYLLGGIATTWAFFLA) threads the bilayer.

This sequence belongs to the PsaA/PsaB family. As to quaternary structure, the PsaA/B heterodimer binds the P700 chlorophyll special pair and subsequent electron acceptors. PSI consists of a core antenna complex that captures photons, and an electron transfer chain that converts photonic excitation into a charge separation. The eukaryotic PSI reaction center is composed of at least 11 subunits. Requires P700 is a chlorophyll a/chlorophyll a' dimer, A0 is one or more chlorophyll a, A1 is one or both phylloquinones and FX is a shared 4Fe-4S iron-sulfur center. as cofactor.

Its subcellular location is the plastid. It is found in the chloroplast thylakoid membrane. The enzyme catalyses reduced [plastocyanin] + hnu + oxidized [2Fe-2S]-[ferredoxin] = oxidized [plastocyanin] + reduced [2Fe-2S]-[ferredoxin]. Functionally, psaA and PsaB bind P700, the primary electron donor of photosystem I (PSI), as well as the electron acceptors A0, A1 and FX. PSI is a plastocyanin-ferredoxin oxidoreductase, converting photonic excitation into a charge separation, which transfers an electron from the donor P700 chlorophyll pair to the spectroscopically characterized acceptors A0, A1, FX, FA and FB in turn. Oxidized P700 is reduced on the lumenal side of the thylakoid membrane by plastocyanin. The protein is Photosystem I P700 chlorophyll a apoprotein A1 of Phalaenopsis aphrodite subsp. formosana (Moth orchid).